The sequence spans 82 residues: Small ribosomal subunit protein uS17 (82 aa).

This sequence belongs to the universal ribosomal protein uS17 family. As to quaternary structure, part of the 30S ribosomal subunit.

Functionally, one of the primary rRNA binding proteins, it binds specifically to the 5'-end of 16S ribosomal RNA. The protein is Small ribosomal subunit protein uS17 of Shewanella halifaxensis (strain HAW-EB4).